The following is a 435-amino-acid chain: Methylenetetrahydrofolate--tRNA-(uracil-5-)-methyltransferase TrmFO (435 aa).

An FAD-binding site is contributed by 9 to 14 (GGGLAG).

This sequence belongs to the MnmG family. TrmFO subfamily. FAD serves as cofactor.

Its subcellular location is the cytoplasm. It carries out the reaction uridine(54) in tRNA + (6R)-5,10-methylene-5,6,7,8-tetrahydrofolate + NADH + H(+) = 5-methyluridine(54) in tRNA + (6S)-5,6,7,8-tetrahydrofolate + NAD(+). The enzyme catalyses uridine(54) in tRNA + (6R)-5,10-methylene-5,6,7,8-tetrahydrofolate + NADPH + H(+) = 5-methyluridine(54) in tRNA + (6S)-5,6,7,8-tetrahydrofolate + NADP(+). In terms of biological role, catalyzes the folate-dependent formation of 5-methyl-uridine at position 54 (M-5-U54) in all tRNAs. The polypeptide is Methylenetetrahydrofolate--tRNA-(uracil-5-)-methyltransferase TrmFO (Geobacter sp. (strain M21)).